Here is a 507-residue protein sequence, read N- to C-terminus: Histidine ammonia-lyase (507 aa).

The 5-imidazolinone (Ala-Gly) cross-link spans 142 to 144 (ASG). Serine 143 is subject to 2,3-didehydroalanine (Ser).

The protein belongs to the PAL/histidase family. In terms of processing, contains an active site 4-methylidene-imidazol-5-one (MIO), which is formed autocatalytically by cyclization and dehydration of residues Ala-Ser-Gly.

It is found in the cytoplasm. The catalysed reaction is L-histidine = trans-urocanate + NH4(+). It functions in the pathway amino-acid degradation; L-histidine degradation into L-glutamate; N-formimidoyl-L-glutamate from L-histidine: step 1/3. The polypeptide is Histidine ammonia-lyase (Maricaulis maris (strain MCS10) (Caulobacter maris)).